Consider the following 478-residue polypeptide: Sialidase-4 (478 aa).

Residues 22-25 carry the FRIP motif motif; that stretch reads YRVP. Arg23 and Arg43 together coordinate substrate. Active-site proton acceptor residues include Asp47 and Asp48. One copy of the BNR 1 repeat lies at 127–138; sequence VTSCDAGLTWGS. Residues Tyr177 and Tyr179 each coordinate substrate. The BNR 2 repeat unit spans residues 200-211; it reads FYSDDHGISWHC. Substrate contacts are provided by Glu222 and Arg238. One copy of the BNR 3 repeat lies at 247–258; the sequence is ALSADEGTSFLP. 2 disordered regions span residues 285-307 and 335-359; these read IEPQ…CFNL and SRSP…PECP. Residue Arg383 participates in substrate binding. Tyr413 functions as the Nucleophile in the catalytic mechanism. Glu434 is an active-site residue.

Belongs to the glycosyl hydrolase 33 family. As to expression, highly expressed in brain, particularly in hippocampus, and at lower levels in liver and spleen. Expressed in hippocampal neurons (at protein level).

Its subcellular location is the cell membrane. It is found in the endoplasmic reticulum membrane. The protein resides in the microsome membrane. It localises to the mitochondrion inner membrane. The protein localises to the mitochondrion outer membrane. Its subcellular location is the cell projection. It is found in the neuron projection. The protein resides in the lysosome lumen. The catalysed reaction is Hydrolysis of alpha-(2-&gt;3)-, alpha-(2-&gt;6)-, alpha-(2-&gt;8)- glycosidic linkages of terminal sialic acid residues in oligosaccharides, glycoproteins, glycolipids, colominic acid and synthetic substrates.. The enzyme catalyses a ganglioside GM3 + H2O = a beta-D-galactosyl-(1-&gt;4)-beta-D-glucosyl-(1&lt;-&gt;1)-ceramide + N-acetylneuraminate. It catalyses the reaction a ganglioside GM3 (d18:1(4E)) + H2O = a beta-D-Gal-(1-&gt;4)-beta-D-Glc-(1&lt;-&gt;1)-Cer(d18:1(4E)) + N-acetylneuraminate. It carries out the reaction a ganglioside GM2 + H2O = a ganglioside GA2 + N-acetylneuraminate. The catalysed reaction is a ganglioside GM2 (d18:1(4E)) + H2O = a ganglioside GA2 (d18:1(4E)) + N-acetylneuraminate. The enzyme catalyses a ganglioside GD1a + H2O = a ganglioside GM1 + N-acetylneuraminate. It catalyses the reaction a ganglioside GD1a (d18:1(4E)) + H2O = a ganglioside GM1 (d18:1(4E)) + N-acetylneuraminate. It carries out the reaction a ganglioside GD3 + H2O = a ganglioside GM3 + N-acetylneuraminate. The catalysed reaction is a ganglioside GD3 (d18:1(4E)) + H2O = a ganglioside GM3 (d18:1(4E)) + N-acetylneuraminate. In terms of biological role, exo-alpha-sialidase that catalyzes the hydrolytic cleavage of the terminal sialic acid (N-acetylneuraminic acid, Neu5Ac) of a glycan moiety in the catabolism of glycolipids, glycoproteins and oligosacharides. Efficiently hydrolyzes gangliosides including alpha-(2-&gt;3)-sialylated GD1a and GM3 and alpha-(2-&gt;8)-sialylated GD3. Hydrolyzes poly-alpha-(2-&gt;8)-sialylated neural cell adhesion molecule NCAM1 likely at growth cones, suppressing neurite outgrowth in hippocampal neurons. May desialylate sialyl Lewis A and X antigens at the cell surface, down-regulating these glycan epitopes recognized by SELE/E selectin in the initiation of cell adhesion and extravasation. Has sialidase activity toward mucin, fetuin and sialyllactose. The polypeptide is Sialidase-4 (Neu4) (Mus musculus (Mouse)).